Reading from the N-terminus, the 95-residue chain is Mitochondrial import inner membrane translocase subunit Tim13 (95 aa).

Residues 46–69 (CFKKCIGKPGSTLDNSEQKCIAMC) carry the Twin CX3C motif motif. 2 disulfides stabilise this stretch: C46–C69 and C50–C65.

Belongs to the small Tim family. As to quaternary structure, heterohexamer; composed of 3 copies of TIMM8 (TIMM8A or TIMM8B) and 3 copies of TIMM13, named soluble 70 kDa complex. Associates with the TIM22 complex, whose core is composed of TIMM22.

The protein resides in the mitochondrion inner membrane. In terms of biological role, mitochondrial intermembrane chaperone that participates in the import and insertion of some multi-pass transmembrane proteins into the mitochondrial inner membrane. Also required for the transfer of beta-barrel precursors from the TOM complex to the sorting and assembly machinery (SAM complex) of the outer membrane. Acts as a chaperone-like protein that protects the hydrophobic precursors from aggregation and guide them through the mitochondrial intermembrane space. The TIMM8-TIMM13 complex mediates the import of some proteins while the predominant TIMM9-TIMM10 70 kDa complex mediates the import of much more proteins. The chain is Mitochondrial import inner membrane translocase subunit Tim13 (timm13) from Danio rerio (Zebrafish).